The chain runs to 483 residues: ATP synthase subunit beta (483 aa).

169–176 (GGAGVGKT) serves as a coordination point for ATP.

This sequence belongs to the ATPase alpha/beta chains family. In terms of assembly, F-type ATPases have 2 components, CF(1) - the catalytic core - and CF(0) - the membrane proton channel. CF(1) has five subunits: alpha(3), beta(3), gamma(1), delta(1), epsilon(1). CF(0) has three main subunits: a(1), b(2) and c(9-12). The alpha and beta chains form an alternating ring which encloses part of the gamma chain. CF(1) is attached to CF(0) by a central stalk formed by the gamma and epsilon chains, while a peripheral stalk is formed by the delta and b chains.

It is found in the cell membrane. It carries out the reaction ATP + H2O + 4 H(+)(in) = ADP + phosphate + 5 H(+)(out). In terms of biological role, produces ATP from ADP in the presence of a proton gradient across the membrane. The catalytic sites are hosted primarily by the beta subunits. This chain is ATP synthase subunit beta, found in Corynebacterium glutamicum (strain ATCC 13032 / DSM 20300 / JCM 1318 / BCRC 11384 / CCUG 27702 / LMG 3730 / NBRC 12168 / NCIMB 10025 / NRRL B-2784 / 534).